A 484-amino-acid chain; its full sequence is Calcium uniporter protein, mitochondrial (484 aa).

The N-terminal 33 residues, 1 to 33, are a transit peptide targeting the mitochondrion; sequence MGHVLGGTLLAANRLARPPAVVLGKPRVCCWRA. Over 34–304 the chain is Mitochondrial matrix; the sequence is SPWPVIVSSA…CDLLAHKGAH (271 aa). Disordered regions lie at residues 59–104 and 188–227; these read ARYE…KGRL and YTGGNKSNDGRREESNGNGSNVASYSGLGREGPSKGDTHW. Residues 61 to 82 show a composition bias toward basic and acidic residues; the sequence is YEARGRSTTQRKVDDRPWHRES. The segment covering 83–93 has biased composition (polar residues); that stretch reads SGSLPKSTSPD. The chain crosses the membrane as a helical span at residues 305 to 326; that stretch reads ALAKGGFAALAAWWGIVYYVTF. The Mitochondrial intermembrane portion of the chain corresponds to 327-334; sequence HTDMGWDL. Residues 332-340 carry the Selectivity filter motif; sequence WDLVEPITY. Residues 335–355 traverse the membrane as a helical segment; sequence VEPITYLAGLASIMGGYLWFL. Residue E336 coordinates Ca(2+). The Mitochondrial matrix portion of the chain corresponds to 356–484; the sequence is FISRDLSYKA…NEAAANVPGD (129 aa). Composition is skewed to basic and acidic residues over residues 426–435 and 452–462; these read KEVLEEEKGG and DHDHDHDHVSH. Positions 426–484 are disordered; the sequence is KEVLEEEKGGKARKREQEDEDGDGDDDHDHDHDHVSHGAELQGQDILHANEAAANVPGD.

It belongs to the MCU (TC 1.A.77) family. As to quaternary structure, homotetramer, assembles in a dimer or dimers configuration with two interfaces.

Its subcellular location is the mitochondrion inner membrane. The catalysed reaction is Ca(2+)(in) = Ca(2+)(out). Inhibited by ruthenium red or its derivative Ru360. Highly selective calcium channel localized to the inner mitochondrial membrane, which mediates calcium uptake into the mitochondrial matrix. Mitochondrial calcium homeostasis plays key roles in cellular physiology and regulates ATP production, cytoplasmic calcium signals and activation of cell death pathways. Sufficient to operate as a pore-forming channel without the need of calcium-sensor or auxiliary subunit. In Metarhizium acridum (strain CQMa 102), this protein is Calcium uniporter protein, mitochondrial.